The primary structure comprises 465 residues: Chromosomal replication initiator protein DnaA (465 aa).

Positions 1–87 (MLWTDCLTRL…RPGSILSSSE (87 aa)) are domain I, interacts with DnaA modulators. The segment at 81–123 (SILSSSEQPATTTAALQTAPIPQPAKGKREPEPVANTAVSSKS) is disordered. Positions 88 to 100 (QPATTTAALQTAP) are enriched in low complexity. Residues 88-127 (QPATTTAALQTAPIPQPAKGKREPEPVANTAVSSKSSKKK) are domain II. The domain III, AAA+ region stretch occupies residues 128 to 345 (LLNPQFTFSL…GALNKVVAIS (218 aa)). 4 residues coordinate ATP: Gly173, Gly175, Lys176, and Thr177. A domain IV, binds dsDNA region spans residues 346–465 (RFKGAPIDLD…YKNLLRLLQS (120 aa)).

It belongs to the DnaA family. In terms of assembly, oligomerizes as a right-handed, spiral filament on DNA at oriC.

It localises to the cytoplasm. In terms of biological role, plays an essential role in the initiation and regulation of chromosomal replication. ATP-DnaA binds to the origin of replication (oriC) to initiate formation of the DNA replication initiation complex once per cell cycle. Binds the DnaA box (a 9 base pair repeat at the origin) and separates the double-stranded (ds)DNA. Forms a right-handed helical filament on oriC DNA; dsDNA binds to the exterior of the filament while single-stranded (ss)DNA is stabiized in the filament's interior. The ATP-DnaA-oriC complex binds and stabilizes one strand of the AT-rich DNA unwinding element (DUE), permitting loading of DNA polymerase. After initiation quickly degrades to an ADP-DnaA complex that is not apt for DNA replication. Binds acidic phospholipids. This Acinetobacter baumannii (strain SDF) protein is Chromosomal replication initiator protein DnaA.